A 305-amino-acid polypeptide reads, in one-letter code: Pseudouridine-5'-phosphate glycosidase (305 aa).

Glu28 serves as the catalytic Proton donor. Residues Lys89 and Val109 each coordinate substrate. Asp141 provides a ligand contact to Mn(2+). 143-145 (SAD) is a substrate binding site. Lys162 (nucleophile) is an active-site residue.

The protein belongs to the pseudouridine-5'-phosphate glycosidase family. Homotrimer. Requires Mn(2+) as cofactor.

It carries out the reaction D-ribose 5-phosphate + uracil = psi-UMP + H2O. Functionally, catalyzes the reversible cleavage of pseudouridine 5'-phosphate (PsiMP) to ribose 5-phosphate and uracil. Functions biologically in the cleavage direction, as part of a pseudouridine degradation pathway. This Dinoroseobacter shibae (strain DSM 16493 / NCIMB 14021 / DFL 12) protein is Pseudouridine-5'-phosphate glycosidase.